The primary structure comprises 251 residues: Putative deaminase AgaI (251 aa).

The active-site Proton acceptor; for enolization step is aspartate 86. The active-site For ring-opening step is asparagine 154. Histidine 156 serves as the catalytic Proton acceptor; for ring-opening step. The active-site For ring-opening step is the glutamate 161.

It belongs to the glucosamine/galactosamine-6-phosphate isomerase family.

The protein is Putative deaminase AgaI (agaI) of Escherichia coli (strain K12).